The primary structure comprises 568 residues: MTTQSEYDYIIIGAGSAGNTLAARLTEDAGVTVLLLEAGGPDYRLDFRTQMPAALAFPLQGRRYNWAYETEPEPHMNNRRMECGRGKGLGGSSLINGMCYIRGNAMDYDGWAKEPGLEDWSYLDCLPYFRKAETRDIGPNDYHGGEGPVSVTTPKAGNNPLFHAMVEAGVQAGFPRTDDLNGYQQEGFGPMDRTVTPNGRRASTARGYLDEAKKRSTLTIVTHALTDRILFEGKRAVGVAYLVGDSDTRIQARARKEVLLCGGAIASPQILQRSGVGPAEVLNKLDIPVVHDLPGVGQNLQDHLEMYLQYACTQPVSLYPSLKWWNQPAIGAEWMFLGTGIGASNQFEAGGFIRSSEAFEWPNIQYHFLPVAINYNGTKGVQEHGFQAHVGSMRSPSRGRVQVKSKDPREYPSILFNYMASEQDWQEFRDGIRLTREIMQQPALDPYRGREISPGIDVQSDEALDQFVREHAETAYHPSCSCKMGTDEMAVVDGQGRVHGLQSLRVVDASIMPIITTGNLNAPTIMIAEKIADKIRGRQPLPRSTADYFVAGDKPARGKPLREISHQA.

8 to 37 is an FAD binding site; the sequence is DYIIIGAGSAGNTLAARLTEDAGVTVLLLE. The active-site Proton acceptor is His-477.

It belongs to the GMC oxidoreductase family. FAD is required as a cofactor.

It carries out the reaction choline + A = betaine aldehyde + AH2. The enzyme catalyses betaine aldehyde + NAD(+) + H2O = glycine betaine + NADH + 2 H(+). It functions in the pathway amine and polyamine biosynthesis; betaine biosynthesis via choline pathway; betaine aldehyde from choline (cytochrome c reductase route): step 1/1. Involved in the biosynthesis of the osmoprotectant glycine betaine. Catalyzes the oxidation of choline to betaine aldehyde and betaine aldehyde to glycine betaine at the same rate. The chain is Oxygen-dependent choline dehydrogenase from Pseudomonas syringae pv. syringae (strain B728a).